The chain runs to 114 residues: Fumarate reductase subunit D (114 aa).

3 helical membrane passes run 25–45, 50–70, and 94–114; these read SGLA…FGII, IIAF…TIFP, and LIFY…VIAI.

Belongs to the FrdD family. As to quaternary structure, part of an enzyme complex containing four subunits: a flavoprotein (FrdA), an iron-sulfur protein (FrdB), and two hydrophobic anchor proteins (FrdC and FrdD).

It is found in the cell inner membrane. Functionally, anchors the catalytic components of the fumarate reductase complex to the cell membrane, binds quinones. The sequence is that of Fumarate reductase subunit D from Mannheimia succiniciproducens (strain KCTC 0769BP / MBEL55E).